The primary structure comprises 462 residues: MREVVSIQIGQCGIQIGNACWELYLLEHGINLDGSLKTKEELTASGSSASVGHDTSANDARTFFTETGNGKQVPRSIFVDLEPTVIDDVRNGCMRELYHPEQLISGKEDAANNYARGRYSIGKEVIDRVTSRLQKIAEQCDSLQGFLIFHSLGGGTGSGFTSLLVERLSTDYSKKCKLDFAVYPSPKVSTAVVEPYNALLTTHSTMDHSDCVFMVDNEAIYDICNNSLGVDRPAYRNLNRLIAQIVSSTTASLRFSGSMNVDLNEFQTNLVPFPRIHFPLVAYAPLMSAERSAHEQHAITTLTNACFESSNMMVKCDPRAGKFMACCMLYRGDVVPKDVNAAVSAIKSKRHIQFVDWCPTGFKIGINYEKPAFVPDGDLAKTSRACCMLSNTTAISVAFSNLSYKFDLMFKKRAFVHWYVGEGMEEGEFTEARENIAVLERDFEEVGLDNAEEGGDEDFDEF.

Residues glutamine 11, glutamate 82, serine 151, glycine 155, threonine 156, threonine 190, asparagine 217, and asparagine 239 each coordinate GTP. Mg(2+) is bound at residue glutamate 82. Glutamate 265 is a catalytic residue.

It belongs to the tubulin family. As to quaternary structure, dimer of alpha and beta chains. A typical microtubule is a hollow water-filled tube with an outer diameter of 25 nm and an inner diameter of 15 nM. Alpha-beta heterodimers associate head-to-tail to form protofilaments running lengthwise along the microtubule wall with the beta-tubulin subunit facing the microtubule plus end conferring a structural polarity. Microtubules usually have 13 protofilaments but different protofilament numbers can be found in some organisms and specialized cells. Requires Mg(2+) as cofactor.

Its subcellular location is the cytoplasm. The protein resides in the cytoskeleton. The enzyme catalyses GTP + H2O = GDP + phosphate + H(+). Its function is as follows. Tubulin is the major constituent of microtubules, a cylinder consisting of laterally associated linear protofilaments composed of alpha- and beta-tubulin heterodimers. Microtubules grow by the addition of GTP-tubulin dimers to the microtubule end, where a stabilizing cap forms. Below the cap, tubulin dimers are in GDP-bound state, owing to GTPase activity of alpha-tubulin. This Drosophila melanogaster (Fruit fly) protein is Tubulin alpha-4 chain (alphaTub67C).